A 331-amino-acid chain; its full sequence is Protein RecA (331 aa).

Position 61–68 (61–68) interacts with ATP; that stretch reads GPESSGKT.

Belongs to the RecA family.

It is found in the cytoplasm. In terms of biological role, can catalyze the hydrolysis of ATP in the presence of single-stranded DNA, the ATP-dependent uptake of single-stranded DNA by duplex DNA, and the ATP-dependent hybridization of homologous single-stranded DNAs. It interacts with LexA causing its activation and leading to its autocatalytic cleavage. The chain is Protein RecA from Mycoplasma mobile (strain ATCC 43663 / 163K / NCTC 11711) (Mesomycoplasma mobile).